A 137-amino-acid polypeptide reads, in one-letter code: Bombinin-like peptides 2 (137 aa).

The signal sequence occupies residues 1–18; it reads MNFKYIVAVSILIASAYA. N70 carries the asparagine amide modification. Positions 92–112 are disordered; the sequence is DSLEHPEEASEKETRGFNQEE. Isoleucine amide is present on I136.

Belongs to the bombinin family. In terms of tissue distribution, expressed by the skin glands.

It localises to the secreted. Bombinin-like peptide 2 has antimicrobial activity, but no hemolytic activity. Preliminary evidence indicates that this peptide does not lyse and thus kill the bacteria by its antimicrobial activity. In terms of biological role, bombinin H2 has antibacterial and hemolytic activity. The protein is Bombinin-like peptides 2 of Bombina variegata (Yellow-bellied toad).